A 344-amino-acid polypeptide reads, in one-letter code: D-beta-hydroxybutyrate dehydrogenase, mitochondrial (344 aa).

The transit peptide at 1-46 directs the protein to the mitochondrion; that stretch reads MLTARLSRPLSQLPRKTLNFSDRENGTRGSLLLYSAPFVPVGRRTY. NAD(+) is bound at residue 59-83; it reads LITGCDSGFGFSLAKHLHSEGFLVF. 2 positions are modified to N6-acetyllysine: K73 and K97. Residue K103 is modified to N6-acetyllysine; alternate. K103 carries the N6-succinyllysine; alternate modification. K177 carries the N6-acetyllysine modification. Position 195 (S195) interacts with substrate. Residue Y208 is the Proton acceptor of the active site. An N6-acetyllysine modification is found at K212. S219 carries O-linked (GlcNAc) serine glycosylation. S246 is subject to Phosphoserine. K260 carries the post-translational modification N6-acetyllysine; alternate. K260 bears the N6-succinyllysine; alternate mark. Position 281 is an N6-acetyllysine (K281).

This sequence belongs to the short-chain dehydrogenases/reductases (SDR) family. In terms of assembly, homotetramer.

Its subcellular location is the mitochondrion inner membrane. The protein localises to the mitochondrion matrix. The catalysed reaction is (R)-3-hydroxybutanoate + NAD(+) = acetoacetate + NADH + H(+). Its activity is regulated as follows. Requires phosphatidylcholine as an allosteric activator for enzymatic activity. This Bos taurus (Bovine) protein is D-beta-hydroxybutyrate dehydrogenase, mitochondrial.